A 113-amino-acid polypeptide reads, in one-letter code: uncharacterized protein (113 aa).

3 helical membrane-spanning segments follow: residues 9–31 (IFPS…SVIY), 36–58 (VLTI…YKFQ), and 71–90 (IMAL…VVAV).

Its subcellular location is the cell membrane. This is an uncharacterized protein from Archaeoglobus fulgidus (strain ATCC 49558 / DSM 4304 / JCM 9628 / NBRC 100126 / VC-16).